The following is a 555-amino-acid chain: Urocanate hydratase (555 aa).

NAD(+)-binding positions include 53–54, Gln-131, 177–179, Glu-197, Arg-202, 243–244, 264–268, 274–275, and Tyr-323; these read GG, GMG, NA, QTSAH, and YL. The active site involves Cys-411. Gly-493 serves as a coordination point for NAD(+).

It belongs to the urocanase family. Requires NAD(+) as cofactor.

Its subcellular location is the cytoplasm. It carries out the reaction 4-imidazolone-5-propanoate = trans-urocanate + H2O. The protein operates within amino-acid degradation; L-histidine degradation into L-glutamate; N-formimidoyl-L-glutamate from L-histidine: step 2/3. Its function is as follows. Catalyzes the conversion of urocanate to 4-imidazolone-5-propionate. This chain is Urocanate hydratase, found in Maricaulis maris (strain MCS10) (Caulobacter maris).